Reading from the N-terminus, the 131-residue chain is Small ribosomal subunit protein uS11 (131 aa).

This sequence belongs to the universal ribosomal protein uS11 family. As to quaternary structure, part of the 30S ribosomal subunit. Interacts with proteins S7 and S18. Binds to IF-3.

In terms of biological role, located on the platform of the 30S subunit, it bridges several disparate RNA helices of the 16S rRNA. Forms part of the Shine-Dalgarno cleft in the 70S ribosome. This Helicobacter pylori (strain Shi470) protein is Small ribosomal subunit protein uS11.